We begin with the raw amino-acid sequence, 396 residues long: MEQTWRWYGPNDPVSLDDVRQAGATGVVTALHHIPNGQVWPVSEIKQRQAEIAAKGLVWSVVESVPIHEEIKTHSGNYDQHIENYQQTLRNLAECGIDIVCYNFMPILDWTRTDLEYQLPDGSKALRFDQIAFAAFELHILKRPGAEKDYTAEEQAQAKAYFDAMTEADIAKLTGNIIAGLPGAEEGYTLDQFRARLAEYDGIDKAQLRENMAYFLRAIIPVAEQVGLRMAVHPDDPPRPILGLPRIVSTIEDMQWLKETVDSIHNGFTMCTGSYGVRADNDLVKMIETFGDRIHFTHLRSTCREGNPKTFHEGGHLQGDVDMYSVVKAILTEEQRRQAAGDMRPIPMRPDHGHQMLDDLHKKTNPGYSAIGRLKGLAEVRGVELALKRTFFPELK.

Belongs to the mannonate dehydratase family. Requires Fe(2+) as cofactor. The cofactor is Mn(2+).

It catalyses the reaction D-mannonate = 2-dehydro-3-deoxy-D-gluconate + H2O. Its pathway is carbohydrate metabolism; pentose and glucuronate interconversion. In terms of biological role, catalyzes the dehydration of D-mannonate. This chain is Mannonate dehydratase, found in Yersinia enterocolitica serotype O:8 / biotype 1B (strain NCTC 13174 / 8081).